We begin with the raw amino-acid sequence, 1061 residues long: Eukaryotic translation initiation factor 3 subunit A (1061 aa).

Residues 114-126 (QSSIEATTGSSSV) show a composition bias toward polar residues. The tract at residues 114-133 (QSSIEATTGSSSVEDLEASE) is disordered. One can recognise a PCI domain in the interval 339–523 (LQKAATFVVL…GVLSFDVDVF (185 aa)). Coiled-coil stretches lie at residues 609-724 (EVIQ…KRLD) and 789-906 (RADL…AAAA). Basic and acidic residues predominate over residues 828–901 (REKREREEKE…EAMARRRAEK (74 aa)). Positions 828-1061 (REKREREEKE…KYVPKFRREG (234 aa)) are disordered. 2 stretches are compositionally biased toward pro residues: residues 950 to 962 (SGPPPARAAPPPI) and 1000 to 1011 (APPPERSGPPPR).

Belongs to the eIF-3 subunit A family. As to quaternary structure, component of the eukaryotic translation initiation factor 3 (eIF-3) complex.

The protein resides in the cytoplasm. In terms of biological role, RNA-binding component of the eukaryotic translation initiation factor 3 (eIF-3) complex, which is involved in protein synthesis of a specialized repertoire of mRNAs and, together with other initiation factors, stimulates binding of mRNA and methionyl-tRNAi to the 40S ribosome. The eIF-3 complex specifically targets and initiates translation of a subset of mRNAs involved in cell proliferation. The polypeptide is Eukaryotic translation initiation factor 3 subunit A (Chaetomium globosum (strain ATCC 6205 / CBS 148.51 / DSM 1962 / NBRC 6347 / NRRL 1970) (Soil fungus)).